Reading from the N-terminus, the 367-residue chain is Chorismate synthase (367 aa).

The disordered stretch occupies residues 41 to 60 (FTHDLQRRASGKSRHTSARR). 2 residues coordinate NADP(+): Arg48 and Arg54. Residues 125 to 127 (RSS), 238 to 239 (NA), Gly278, 293 to 297 (KPTSS), and Arg319 contribute to the FMN site.

Belongs to the chorismate synthase family. Homotetramer. The cofactor is FMNH2.

It carries out the reaction 5-O-(1-carboxyvinyl)-3-phosphoshikimate = chorismate + phosphate. It functions in the pathway metabolic intermediate biosynthesis; chorismate biosynthesis; chorismate from D-erythrose 4-phosphate and phosphoenolpyruvate: step 7/7. In terms of biological role, catalyzes the anti-1,4-elimination of the C-3 phosphate and the C-6 proR hydrogen from 5-enolpyruvylshikimate-3-phosphate (EPSP) to yield chorismate, which is the branch point compound that serves as the starting substrate for the three terminal pathways of aromatic amino acid biosynthesis. This reaction introduces a second double bond into the aromatic ring system. The chain is Chorismate synthase from Xanthomonas euvesicatoria pv. vesicatoria (strain 85-10) (Xanthomonas campestris pv. vesicatoria).